The sequence spans 74 residues: Kappa-scoloptoxin(07)-Ssm2f (74 aa).

The first 19 residues, 1–19 (MLVFYAILFVTVFSNTVMG), serve as a signal peptide directing secretion. Positions 20–41 (ATIDKPIPKPIFREAIEEMEVN) are excised as a propeptide.

It belongs to the scoloptoxin-07 family. Post-translationally, contains 3 disulfide bonds. As to expression, expressed by the venom gland.

It localises to the secreted. Functionally, inhibits voltage-gated potassium channels. The chain is Kappa-scoloptoxin(07)-Ssm2f from Scolopendra mutilans (Chinese red-headed centipede).